We begin with the raw amino-acid sequence, 453 residues long: Bifunctional protein GlmU (453 aa).

Residues 1–226 (MKFSAVILAA…PIEVEGVNDR (226 aa)) are pyrophosphorylase. UDP-N-acetyl-alpha-D-glucosamine is bound by residues 8–11 (LAAG), Lys-22, Gln-73, 78–79 (GT), 100–102 (YGD), Gly-137, Glu-151, Asn-166, and Asn-224. Residue Asp-102 participates in Mg(2+) binding. Asn-224 is a Mg(2+) binding site. Positions 227-247 (AQLARLERAFQAAQAKKLLEQ) are linker. The interval 248–453 (GVMLRDPARF…TGWQRPVKKK (206 aa)) is N-acetyltransferase. The UDP-N-acetyl-alpha-D-glucosamine site is built by Arg-330 and Lys-348. Residue His-360 is the Proton acceptor of the active site. UDP-N-acetyl-alpha-D-glucosamine-binding residues include Tyr-363 and Asn-374. Acetyl-CoA contacts are provided by residues Ala-377, 383–384 (NY), Ser-402, Ala-420, and Arg-437.

The protein in the N-terminal section; belongs to the N-acetylglucosamine-1-phosphate uridyltransferase family. In the C-terminal section; belongs to the transferase hexapeptide repeat family. Homotrimer. Mg(2+) serves as cofactor.

The protein localises to the cytoplasm. The enzyme catalyses alpha-D-glucosamine 1-phosphate + acetyl-CoA = N-acetyl-alpha-D-glucosamine 1-phosphate + CoA + H(+). It catalyses the reaction N-acetyl-alpha-D-glucosamine 1-phosphate + UTP + H(+) = UDP-N-acetyl-alpha-D-glucosamine + diphosphate. The protein operates within nucleotide-sugar biosynthesis; UDP-N-acetyl-alpha-D-glucosamine biosynthesis; N-acetyl-alpha-D-glucosamine 1-phosphate from alpha-D-glucosamine 6-phosphate (route II): step 2/2. It participates in nucleotide-sugar biosynthesis; UDP-N-acetyl-alpha-D-glucosamine biosynthesis; UDP-N-acetyl-alpha-D-glucosamine from N-acetyl-alpha-D-glucosamine 1-phosphate: step 1/1. It functions in the pathway bacterial outer membrane biogenesis; LPS lipid A biosynthesis. Functionally, catalyzes the last two sequential reactions in the de novo biosynthetic pathway for UDP-N-acetylglucosamine (UDP-GlcNAc). The C-terminal domain catalyzes the transfer of acetyl group from acetyl coenzyme A to glucosamine-1-phosphate (GlcN-1-P) to produce N-acetylglucosamine-1-phosphate (GlcNAc-1-P), which is converted into UDP-GlcNAc by the transfer of uridine 5-monophosphate (from uridine 5-triphosphate), a reaction catalyzed by the N-terminal domain. In Vibrio vulnificus (strain CMCP6), this protein is Bifunctional protein GlmU.